We begin with the raw amino-acid sequence, 91 residues long: Small ribosomal subunit protein bS16 (91 aa).

The protein belongs to the bacterial ribosomal protein bS16 family.

This Limosilactobacillus fermentum (strain NBRC 3956 / LMG 18251) (Lactobacillus fermentum) protein is Small ribosomal subunit protein bS16.